The primary structure comprises 760 residues: Endoplasmin homolog (760 aa).

The first 23 residues, 1–23 (MRFLLVGFVALLAVSAFIPNVYA), serve as a signal peptide directing secretion. Residues Asn95, Asp137, Asn150, and Phe187 each contribute to the ATP site. Asn95 carries N-linked (GlcNAc...) asparagine glycosylation. The N-linked (GlcNAc...) asparagine glycan is linked to Asn423. A disordered region spans residues 727–760 (SQDAQVETEQHIEEAEPEPEAAEETTIEEEHSEL). Residues 741-760 (AEPEPEAAEETTIEEEHSEL) show a composition bias toward acidic residues. A Prevents secretion from ER motif is present at residues 757–760 (HSEL).

The protein belongs to the heat shock protein 90 family.

The protein resides in the endoplasmic reticulum lumen. In terms of biological role, molecular chaperone that functions in the processing and transport of secreted proteins. In Caenorhabditis elegans, this protein is Endoplasmin homolog.